A 434-amino-acid chain; its full sequence is MKRILLSSDRSGSGKTLITSAIMRALSKKYKVRGFKAGPDFIDPGYHKIATGFPSINLDLWMMGKNNVKRSLAKYGKEFDIGIIEGVMGLYDGVDTLYSTYELAKVTKTPIILIINCSNIGSTVGAIVKGLKYYRSDVSIRGVIFNKIASETHYNYCRNAVEDVEVLGYVPFDKNLEIKSRHLGLVTVEDNREVQNLIRYASELVEKYVDLDKIYEMASDEDLEIDLPEDNESNGVKRKMAIAYDPAFSFYYQENLDILKNKYELEFFSPLNNEYVEDAEAIYIGGGYPELHLNELEKSTRTKKWLKNMSYAGVKIYAECGGLMYLSKNLIDENNKNHSMTGIFDIDIKTKDKLTIGYTELEAVKENFIVNKNNVVRGHEFHVSKPISVNEKEFVFKVRIGKGIINKLDGVKSNNTVASYSHLHFSNFQLRIVF.

Residues 239 to 430 (KMAIAYDPAF…SHLHFSNFQL (192 aa)) form the GATase cobBQ-type domain. The Nucleophile role is filled by cysteine 320.

This sequence belongs to the CobB/CbiA family. The cofactor is Mg(2+).

It catalyses the reaction cob(II)yrinate + 2 L-glutamine + 2 ATP + 2 H2O = cob(II)yrinate a,c diamide + 2 L-glutamate + 2 ADP + 2 phosphate + 2 H(+). It participates in cofactor biosynthesis; adenosylcobalamin biosynthesis; cob(II)yrinate a,c-diamide from sirohydrochlorin (anaerobic route): step 10/10. Functionally, catalyzes the ATP-dependent amidation of the two carboxylate groups at positions a and c of cobyrinate, using either L-glutamine or ammonia as the nitrogen source. The polypeptide is Cobyrinate a,c-diamide synthase (Saccharolobus solfataricus (strain ATCC 35092 / DSM 1617 / JCM 11322 / P2) (Sulfolobus solfataricus)).